The sequence spans 430 residues: Asparagine--tRNA ligase (430 aa).

The protein belongs to the class-II aminoacyl-tRNA synthetase family. As to quaternary structure, homodimer.

Its subcellular location is the cytoplasm. It catalyses the reaction tRNA(Asn) + L-asparagine + ATP = L-asparaginyl-tRNA(Asn) + AMP + diphosphate + H(+). The protein is Asparagine--tRNA ligase of Staphylococcus aureus (strain JH1).